The chain runs to 601 residues: ATP-dependent lipid A-core flippase (601 aa).

In terms of domain architecture, ABC transmembrane type-1 spans 28-328 (LLSVCGLIVY…LTRVNAEFQR (301 aa)). 6 helical membrane-spanning segments follow: residues 32 to 52 (CGLI…GPFI), 81 to 101 (VLLM…FANF), 160 to 180 (ALIS…LMFY), 183 to 203 (WKLS…ITIV), 267 to 287 (AVSQ…VLYA), and 296 to 316 (DLTA…LQPI). Residues 360–597 (LRFDNVSFSY…GGMYAKLYQM (238 aa)) form the ABC transporter domain. An ATP-binding site is contributed by 394 to 401 (GRSGSGKS).

This sequence belongs to the ABC transporter superfamily. Lipid exporter (TC 3.A.1.106) family. As to quaternary structure, homodimer.

The protein resides in the cell inner membrane. It carries out the reaction ATP + H2O + lipid A-core oligosaccharideSide 1 = ADP + phosphate + lipid A-core oligosaccharideSide 2.. Involved in lipopolysaccharide (LPS) biosynthesis. Translocates lipid A-core from the inner to the outer leaflet of the inner membrane. Transmembrane domains (TMD) form a pore in the inner membrane and the ATP-binding domain (NBD) is responsible for energy generation. The chain is ATP-dependent lipid A-core flippase from Shewanella sp. (strain MR-4).